The following is a 241-amino-acid chain: Chloride intracellular channel protein 1 (241 aa).

Ala2 is modified (N-acetylalanine). Residues 2–90 (AEEQPQVELF…EEFLEAVLCP (89 aa)) are required for insertion into the membrane. Lys13 is subject to N6-acetyllysine. Residues 24–27 (CPFS) carry the G-site motif. Cys24 and Cys59 form a disulfide bridge. The chain crosses the membrane as a helical span at residues 26 to 46 (FSQRLFMVLWLKGVTFNVTTV). A GST C-terminal domain is found at 93–233 (YPKLAALNPE…PDDEEIELAY (141 aa)). Lys119 bears the N6-acetyllysine mark. Ser121 carries the post-translational modification Phosphoserine. Lys131 bears the N6-acetyllysine mark. Position 156 is a phosphoserine (Ser156). Phosphotyrosine is present on Tyr233.

Belongs to the chloride channel CLIC family. In terms of assembly, monomer. Homodimer (in vitro). Interacts with TRAPPC2. Dimerization requires a conformation change that leads to the exposure of a large hydrophobic surface. In vivo, this may lead to membrane insertion.

It localises to the nucleus. The protein localises to the nucleus membrane. The protein resides in the cytoplasm. It is found in the cell membrane. Its subcellular location is the endoplasmic reticulum. It carries out the reaction L-dehydroascorbate + 2 glutathione = glutathione disulfide + L-ascorbate. The catalysed reaction is chloride(in) = chloride(out). The enzyme catalyses iodide(out) = iodide(in). It catalyses the reaction thiocyanate(in) = thiocyanate(out). It carries out the reaction nitrate(in) = nitrate(out). The catalysed reaction is bromide(in) = bromide(out). The enzyme catalyses fluoride(in) = fluoride(out). In the soluble state, catalyzes glutaredoxin-like thiol disulfide exchange reactions with reduced glutathione as electron donor. Reduces selenite and dehydroascorbate and may act as an antioxidant during oxidative stress response. Can insert into membranes and form voltage-dependent multi-ion conductive channels. Membrane insertion seems to be redox-regulated and may occur only under oxidizing conditions. Involved in regulation of the cell cycle. This chain is Chloride intracellular channel protein 1 (CLIC1), found in Bos taurus (Bovine).